A 454-amino-acid polypeptide reads, in one-letter code: tRNA modification GTPase MnmE (454 aa).

3 residues coordinate (6S)-5-formyl-5,6,7,8-tetrahydrofolate: Arg-23, Glu-80, and Lys-120. Positions 216 to 377 (GMKVVIAGRP…LRNHLKQSMG (162 aa)) constitute a TrmE-type G domain. Asn-226 contacts K(+). Residues 226 to 231 (NAGKSS), 245 to 251 (TDIAGTT), 270 to 273 (DTAG), 335 to 338 (NKAD), and 358 to 360 (SAR) contribute to the GTP site. Ser-230 contributes to the Mg(2+) binding site. The K(+) site is built by Thr-245, Ile-247, and Thr-250. Thr-251 lines the Mg(2+) pocket. A (6S)-5-formyl-5,6,7,8-tetrahydrofolate-binding site is contributed by Lys-454.

This sequence belongs to the TRAFAC class TrmE-Era-EngA-EngB-Septin-like GTPase superfamily. TrmE GTPase family. As to quaternary structure, homodimer. Heterotetramer of two MnmE and two MnmG subunits. K(+) is required as a cofactor.

It localises to the cytoplasm. In terms of biological role, exhibits a very high intrinsic GTPase hydrolysis rate. Involved in the addition of a carboxymethylaminomethyl (cmnm) group at the wobble position (U34) of certain tRNAs, forming tRNA-cmnm(5)s(2)U34. The polypeptide is tRNA modification GTPase MnmE (Salmonella paratyphi C (strain RKS4594)).